A 231-amino-acid chain; its full sequence is Transmembrane protein 225 (231 aa).

The Cytoplasmic segment spans residues 1–13 (MVHILVRKVEATN). A helical membrane pass occupies residues 14 to 34 (MFFSSWTLVFLAVGIIIEEWA). Residues 35-67 (ELKLGPQKPTITHSPWICCTPLWPSDGLEVIRN) lie on the Extracellular side of the membrane. Residues 68–88 (ILIVVLSLSFMHNLLLGFEFT) traverse the membrane as a helical segment. Residues 89–97 (YMIPQTKYT) lie on the Cytoplasmic side of the membrane. Residues 98-118 (LIMTACLAFLTGILLLGALLL) traverse the membrane as a helical segment. Residues 119–135 (YHHMLRQGESVYYSSYK) are Extracellular-facing. A helical membrane pass occupies residues 136–156 (ISWIIFTAYLNVLFLFISGFL). The Cytoplasmic portion of the chain corresponds to 157-231 (SLLQYKQPID…IQARRVTWAL (75 aa)). Residues 225 to 229 (RRVTW) carry the RVxF motif.

As to quaternary structure, interacts (via RVxF motif) with PPP1CC.

It is found in the cytoplasmic vesicle. The protein resides in the secretory vesicle. It localises to the acrosome membrane. Its function is as follows. Probably inhibits protein phosphatase 1 (PP1) in sperm via binding to catalytic subunit PPP1CC. In Bos taurus (Bovine), this protein is Transmembrane protein 225 (TMEM225).